A 232-amino-acid polypeptide reads, in one-letter code: Zinc-finger homeodomain protein 5 (232 aa).

Positions 1-11 are enriched in acidic residues; sequence MELSEHEEDAG. A disordered region spans residues 1–25; that stretch reads MELSEHEEDAGDVGGGCSSPPTPPH. The ZF-HD dimerization-type; degenerate zinc-finger motif lies at 40–86; the sequence is YHECLRNHAAASGGHVVDGCGEFMPASTEEPLACAACGCHRSFHRRD. Residues 126–170 form a disordered region; that stretch reads GLPFPGYGTPSGGTGTTTASSSDERLRPSPVQPRRRSRTTFTREQ. Residues 159-222 constitute a DNA-binding region (homeobox); it reads RRRSRTTFTR…NNKHSFKQKQ (64 aa).

Homo- and heterodimer with other ZFHD proteins.

The protein resides in the nucleus. In terms of biological role, putative transcription factor. The polypeptide is Zinc-finger homeodomain protein 5 (ZHD5) (Oryza sativa subsp. indica (Rice)).